The following is an 81-amino-acid chain: Anaphase-promoting complex subunit emb-1 (81 aa).

As to quaternary structure, the APC/C is probably composed of at least 12 subunits: apc-2, apc-10, apc-11, cdc-26, emb-1, emb-27, emb-30, mat-1, mat-2, mat-3, such-1 and gfi-3. As to expression, expressed in germ cells.

It participates in protein modification; protein ubiquitination. In terms of biological role, probable component of the anaphase promoting complex/cyclosome (APC/C), a cell cycle-regulated E3 ubiquitin ligase that controls progression through mitosis and the G1 phase of the cell cycle. The APC/C complex acts by mediating ubiquitination and subsequent degradation of target proteins. Developmental role in early embryogenesis and the metaphase to anaphase transition in meiosis and mitosis. May be required for germline proliferation. Required for male tail development and hermaphrodite vulva formation. The sequence is that of Anaphase-promoting complex subunit emb-1 from Caenorhabditis elegans.